The primary structure comprises 228 residues: ATP phosphoribosyltransferase (228 aa).

It belongs to the ATP phosphoribosyltransferase family. Short subfamily. As to quaternary structure, heteromultimer composed of HisG and HisZ subunits.

It is found in the cytoplasm. It catalyses the reaction 1-(5-phospho-beta-D-ribosyl)-ATP + diphosphate = 5-phospho-alpha-D-ribose 1-diphosphate + ATP. It participates in amino-acid biosynthesis; L-histidine biosynthesis; L-histidine from 5-phospho-alpha-D-ribose 1-diphosphate: step 1/9. Functionally, catalyzes the condensation of ATP and 5-phosphoribose 1-diphosphate to form N'-(5'-phosphoribosyl)-ATP (PR-ATP). Has a crucial role in the pathway because the rate of histidine biosynthesis seems to be controlled primarily by regulation of HisG enzymatic activity. This is ATP phosphoribosyltransferase from Acinetobacter baylyi (strain ATCC 33305 / BD413 / ADP1).